A 1094-amino-acid polypeptide reads, in one-letter code: AP-3 complex subunit beta-1 (1094 aa).

The segment covering Met-1 to Gln-11 has biased composition (polar residues). 2 disordered regions span residues Met-1–Ser-31 and Asp-268–Thr-292. Phosphoserine occurs at positions 276 and 609. Residues Pro-662 to Pro-811 form a disordered region. Over residues Ala-666–Ser-677 the composition is skewed to basic and acidic residues. Composition is skewed to acidic residues over residues Glu-678–Ser-696 and Glu-705–Ser-726. Basic and acidic residues-rich tracts occupy residues Glu-727 to Arg-738 and Gly-748 to Thr-764. A phosphoserine mark is found at Ser-750 and Ser-752. A compositionally biased stretch (low complexity) spans Ser-765 to Asp-777. A compositionally biased stretch (acidic residues) spans Ser-778–Glu-791. Basic and acidic residues predominate over residues Ser-792–Pro-811.

Belongs to the adaptor complexes large subunit family. In terms of assembly, adaptor protein complex 3 (AP-3) is a heterotetramer composed of two large adaptins (delta-type subunit AP3D1 and beta-type subunit AP3B1 or AP3B2), a medium adaptin (mu-type subunit AP3M1 or AP3M2) and a small adaptin (sigma-type subunit APS1 or AP3S2). AP-3 associates with the BLOC-1 complex. Interacts with KIF3A; interaction is direct; interaction is impaired by pyrophosphorylation of AP3B1. In terms of processing, phosphorylated on serine residues. Pyrophosphorylation by 5-diphosphoinositol pentakisphosphate (5-IP7) impairs interaction with KIF3A. Serine pyrophosphorylation is achieved by Mg(2+)-dependent, but enzyme independent transfer of a beta-phosphate from a inositol pyrophosphate to a pre-phosphorylated serine residue. Ubiquitously expressed.

It localises to the cytoplasmic vesicle. The protein localises to the clathrin-coated vesicle membrane. The protein resides in the golgi apparatus. Functionally, subunit of non-clathrin- and clathrin-associated adaptor protein complex 3 (AP-3) that plays a role in protein sorting in the late-Golgi/trans-Golgi network (TGN) and/or endosomes. The AP complexes mediate both the recruitment of clathrin to membranes and the recognition of sorting signals within the cytosolic tails of transmembrane cargo molecules. AP-3 appears to be involved in the sorting of a subset of transmembrane proteins targeted to lysosomes and lysosome-related organelles. In concert with the BLOC-1 complex, AP-3 is required to target cargos into vesicles assembled at cell bodies for delivery into neurites and nerve terminals. This Homo sapiens (Human) protein is AP-3 complex subunit beta-1 (AP3B1).